The primary structure comprises 432 residues: Glutamyl-tRNA reductase (432 aa).

Substrate is bound by residues 49–52, S109, 114–116, and Q120; these read TCNR and EGQ. The Nucleophile role is filled by C50. 198 to 203 contributes to the NADP(+) binding site; the sequence is GAGRMS.

This sequence belongs to the glutamyl-tRNA reductase family. In terms of assembly, homodimer.

It catalyses the reaction (S)-4-amino-5-oxopentanoate + tRNA(Glu) + NADP(+) = L-glutamyl-tRNA(Glu) + NADPH + H(+). The protein operates within porphyrin-containing compound metabolism; protoporphyrin-IX biosynthesis; 5-aminolevulinate from L-glutamyl-tRNA(Glu): step 1/2. It functions in the pathway porphyrin-containing compound metabolism; chlorophyll biosynthesis. Catalyzes the NADPH-dependent reduction of glutamyl-tRNA(Glu) to glutamate 1-semialdehyde (GSA). The chain is Glutamyl-tRNA reductase from Synechococcus sp. (strain CC9605).